We begin with the raw amino-acid sequence, 300 residues long: MKKVCFSFVIMVIALIAAGCGAEDTGTSEDGEGLKIVTSFSILGDVLENIAGERSSVTYIVPIGEEPHEYEPVPSDFQAVSDADVFYVNGLGLEEWLQRLVENTSDVDVVEVSPTIDALPLEESDGLDPHAWLDVKNVMKYVEVIRDDLVERDPDGAEIYVANAEAYLQDLQELEEWIHDQVTTIPEEQRTIVISENAYRYFGEAYGFDTVGIWELNSHEEGTPGQISRVVDIVKELDLPAVFVETTVNKSFMTTVSNDSGVDIAGEVYTDAVGLEGSGAETYIDMMKHNVDTFVSGLSQ.

The signal sequence occupies residues Met-1–Gly-19. Cys-20 is lipidated: N-palmitoyl cysteine. Cys-20 carries S-diacylglycerol cysteine lipidation. Residues His-68, His-130, Glu-196, and Asp-271 each contribute to the Mn(2+) site.

It belongs to the bacterial solute-binding protein 9 family.

It localises to the cell membrane. Probably part of ATP-binding cassette (ABC) transport system MntABCD involved in manganese import. Binds manganese and delivers it to the membrane permease for translocation into the cytoplasm. The protein is Manganese-binding lipoprotein MntA (mntA) of Halalkalibacterium halodurans (strain ATCC BAA-125 / DSM 18197 / FERM 7344 / JCM 9153 / C-125) (Bacillus halodurans).